Here is a 367-residue protein sequence, read N- to C-terminus: Leucine carboxyl methyltransferase 1 (367 aa).

Residues R84, G109, D132, 187–188 (DL), and E212 contribute to the S-adenosyl-L-methionine site.

Belongs to the methyltransferase superfamily. LCMT family.

It carries out the reaction [phosphatase 2A protein]-C-terminal L-leucine + S-adenosyl-L-methionine = [phosphatase 2A protein]-C-terminal L-leucine methyl ester + S-adenosyl-L-homocysteine. Methylates the carboxyl group of the C-terminal leucine residue of protein phosphatase 2A catalytic subunits to form alpha-leucine ester residues. This is Leucine carboxyl methyltransferase 1 (PPM1) from Candida albicans (strain SC5314 / ATCC MYA-2876) (Yeast).